Reading from the N-terminus, the 274-residue chain is MIEIKKAKPTSPGRRHVVSVKNTELHTGKPFKGLVEVKKSKAGRNNTGRITVRHQGGGHKQHYRIVDFKRNKDDIVARVERIEYDPNRSANIALVLYADGERRYIIAPKGLKKDMSVVSGEKVDVAVGNCMPLRNIPLGTVIHNIEMKPKKGAQMIRSAGTFAQLVGKDNAYAIIRLRSGEMRRVLLDCRAVIGVVSNSEHNLKSLGKAGAKRWRGIRPTVRGVAMNPVDHPHGGGEGRTSGGRHPVTPWGIPTKGYKTRKNKRSNKLIVQKRK.

The tract at residues 224–274 (VAMNPVDHPHGGGEGRTSGGRHPVTPWGIPTKGYKTRKNKRSNKLIVQKRK) is disordered. Residues 257–274 (YKTRKNKRSNKLIVQKRK) are compositionally biased toward basic residues.

The protein belongs to the universal ribosomal protein uL2 family. In terms of assembly, part of the 50S ribosomal subunit. Forms a bridge to the 30S subunit in the 70S ribosome.

In terms of biological role, one of the primary rRNA binding proteins. Required for association of the 30S and 50S subunits to form the 70S ribosome, for tRNA binding and peptide bond formation. It has been suggested to have peptidyltransferase activity; this is somewhat controversial. Makes several contacts with the 16S rRNA in the 70S ribosome. This is Large ribosomal subunit protein uL2 from Francisella philomiragia subsp. philomiragia (strain ATCC 25017 / CCUG 19701 / FSC 153 / O#319-036).